Reading from the N-terminus, the 121-residue chain is uncharacterized protein (121 aa).

The region spanning 47–101 (SEVPHYHAEHDLTFTVLKGKGELYLEGEKKKLKEGDWAFIPKGAVHFYRNTSELS) is the Cupin type-2 domain.

This is an uncharacterized protein from Aquifex aeolicus (strain VF5).